The chain runs to 338 residues: D-erythrose-4-phosphate dehydrogenase (338 aa).

Residue 12–13 (RI) coordinates NAD(+). Substrate-binding positions include 154–156 (SCT), arginine 200, 213–214 (TK), and arginine 236. Catalysis depends on cysteine 155, which acts as the Nucleophile. Residue asparagine 318 coordinates NAD(+).

This sequence belongs to the glyceraldehyde-3-phosphate dehydrogenase family. Epd subfamily. In terms of assembly, homotetramer.

The protein resides in the cytoplasm. It catalyses the reaction D-erythrose 4-phosphate + NAD(+) + H2O = 4-phospho-D-erythronate + NADH + 2 H(+). It functions in the pathway cofactor biosynthesis; pyridoxine 5'-phosphate biosynthesis; pyridoxine 5'-phosphate from D-erythrose 4-phosphate: step 1/5. Functionally, catalyzes the NAD-dependent conversion of D-erythrose 4-phosphate to 4-phosphoerythronate. In Pectobacterium atrosepticum (strain SCRI 1043 / ATCC BAA-672) (Erwinia carotovora subsp. atroseptica), this protein is D-erythrose-4-phosphate dehydrogenase.